The primary structure comprises 418 residues: Putative ion-transport protein YfeO (418 aa).

The next 11 helical transmembrane spans lie at 9 to 31 (MLLLSLPAVAIGIASSLILIMVM), 55 to 77 (SPLWIIGVLTLTGIAVGLVIRFS), 90 to 112 (LIGAPIPPSALPGLIVALILGLA), 122 to 140 (PIITVNIALAVAIGARLLP), 147 to 169 (WTILASAGTIGALFGTPVAAALI), 189 to 211 (PLMAAAAGALTTGLFFHPHFSLP), 223 to 244 (ILSGAIVAAIAIAAGMVAVWCL), 259 to 281 (FVLGIGGFILGILGVIGGPVSLF), 301 to 323 (YFLLAVIKLAALVVAAASGFRGG), 343 to 363 (VPAVPAAITVSCAILGIVLVV), and 376 to 398 (VVVPNTTLLPLLCIVMLPAWLLL).

Belongs to the chloride channel (TC 2.A.49) family.

It is found in the cell membrane. The sequence is that of Putative ion-transport protein YfeO (yfeO) from Escherichia coli O6:H1 (strain CFT073 / ATCC 700928 / UPEC).